A 596-amino-acid polypeptide reads, in one-letter code: Elongation factor 4 (596 aa).

Positions Lys2–Glu184 constitute a tr-type G domain. Residues Asp14–Thr19 and Asn131–Asp134 each bind GTP.

Belongs to the TRAFAC class translation factor GTPase superfamily. Classic translation factor GTPase family. LepA subfamily.

The protein resides in the cell inner membrane. The catalysed reaction is GTP + H2O = GDP + phosphate + H(+). Required for accurate and efficient protein synthesis under certain stress conditions. May act as a fidelity factor of the translation reaction, by catalyzing a one-codon backward translocation of tRNAs on improperly translocated ribosomes. Back-translocation proceeds from a post-translocation (POST) complex to a pre-translocation (PRE) complex, thus giving elongation factor G a second chance to translocate the tRNAs correctly. Binds to ribosomes in a GTP-dependent manner. In Shewanella baltica (strain OS155 / ATCC BAA-1091), this protein is Elongation factor 4.